The sequence spans 108 residues: Phosphoribosyl-ATP pyrophosphatase (108 aa).

The protein belongs to the PRA-PH family.

The protein localises to the cytoplasm. It catalyses the reaction 1-(5-phospho-beta-D-ribosyl)-ATP + H2O = 1-(5-phospho-beta-D-ribosyl)-5'-AMP + diphosphate + H(+). It functions in the pathway amino-acid biosynthesis; L-histidine biosynthesis; L-histidine from 5-phospho-alpha-D-ribose 1-diphosphate: step 2/9. This is Phosphoribosyl-ATP pyrophosphatase from Aromatoleum aromaticum (strain DSM 19018 / LMG 30748 / EbN1) (Azoarcus sp. (strain EbN1)).